The sequence spans 363 residues: Spermidine/putrescine import ATP-binding protein PotA (363 aa).

The region spanning 6–236 (LEIRNVTRRF…PRSRFVADFI (231 aa)) is the ABC transporter domain. Position 38–45 (38–45 (GPSGCGKT)) interacts with ATP.

The protein belongs to the ABC transporter superfamily. Spermidine/putrescine importer (TC 3.A.1.11.1) family. The complex is composed of two ATP-binding proteins (PotA), two transmembrane proteins (PotB and PotC) and a solute-binding protein (PotD).

The protein resides in the cell inner membrane. The enzyme catalyses ATP + H2O + polyamine-[polyamine-binding protein]Side 1 = ADP + phosphate + polyamineSide 2 + [polyamine-binding protein]Side 1.. Part of the ABC transporter complex PotABCD involved in spermidine/putrescine import. Responsible for energy coupling to the transport system. In Pseudomonas aeruginosa (strain UCBPP-PA14), this protein is Spermidine/putrescine import ATP-binding protein PotA.